The following is a 177-amino-acid chain: Adenine phosphoribosyltransferase (177 aa).

Belongs to the purine/pyrimidine phosphoribosyltransferase family. Homodimer.

It localises to the cytoplasm. It carries out the reaction AMP + diphosphate = 5-phospho-alpha-D-ribose 1-diphosphate + adenine. Its pathway is purine metabolism; AMP biosynthesis via salvage pathway; AMP from adenine: step 1/1. Its function is as follows. Catalyzes a salvage reaction resulting in the formation of AMP, that is energically less costly than de novo synthesis. The chain is Adenine phosphoribosyltransferase from Rhodococcus opacus (strain B4).